The following is a 285-amino-acid chain: MPELPEVEVVRRGLEEHMVGRTIVSAAVVHPRTARNQAGGGAEIEANLTGLRVGATNRRGKFLWLELDDVAQQAPSGLGLLVHLGMSGQMLVKSPDATLNPHLRARAELDDGNEVWFVDQRTFGYWWLGELVDGVPGRVSHIARDLLDDALDIPALAAVLKTKNTEIKRLLLNQEIVSGIGNIYADEMLWEAGIHPRQKASRISLTRLVALLEAGREVMTRALDQGGTSFDALYVNVNGASGYFSLSLNAYGQAGKPCARCGTPIARETFMNRGSHFCNRCQKVR.

The active-site Schiff-base intermediate with DNA is the Pro-2. Glu-3 (proton donor) is an active-site residue. Residue Lys-61 is the Proton donor; for beta-elimination activity of the active site. Residues His-102, Arg-121, and Lys-163 each contribute to the DNA site. The segment at 249–283 (NAYGQAGKPCARCGTPIARETFMNRGSHFCNRCQK) adopts an FPG-type zinc-finger fold. The active-site Proton donor; for delta-elimination activity is the Arg-273.

This sequence belongs to the FPG family. In terms of assembly, monomer. The cofactor is Zn(2+).

It carries out the reaction Hydrolysis of DNA containing ring-opened 7-methylguanine residues, releasing 2,6-diamino-4-hydroxy-5-(N-methyl)formamidopyrimidine.. The catalysed reaction is 2'-deoxyribonucleotide-(2'-deoxyribose 5'-phosphate)-2'-deoxyribonucleotide-DNA = a 3'-end 2'-deoxyribonucleotide-(2,3-dehydro-2,3-deoxyribose 5'-phosphate)-DNA + a 5'-end 5'-phospho-2'-deoxyribonucleoside-DNA + H(+). Functionally, involved in base excision repair of DNA damaged by oxidation or by mutagenic agents. Acts as a DNA glycosylase that recognizes and removes damaged bases. Has a preference for oxidized purines, such as 7,8-dihydro-8-oxoguanine (8-oxoG). Has AP (apurinic/apyrimidinic) lyase activity and introduces nicks in the DNA strand. Cleaves the DNA backbone by beta-delta elimination to generate a single-strand break at the site of the removed base with both 3'- and 5'-phosphates. This is Formamidopyrimidine-DNA glycosylase from Corynebacterium efficiens (strain DSM 44549 / YS-314 / AJ 12310 / JCM 11189 / NBRC 100395).